A 259-amino-acid polypeptide reads, in one-letter code: Alpha-acetolactate decarboxylase (259 aa).

Belongs to the alpha-acetolactate decarboxylase family.

The catalysed reaction is (2S)-2-acetolactate + H(+) = (R)-acetoin + CO2. The protein operates within polyol metabolism; (R,R)-butane-2,3-diol biosynthesis; (R,R)-butane-2,3-diol from pyruvate: step 2/3. In terms of biological role, converts acetolactate into acetoin, which can be excreted by the cells. This may be a mechanism for controlling the internal pH of cells in the stationary stage. This chain is Alpha-acetolactate decarboxylase (budA), found in Raoultella terrigena (Klebsiella terrigena).